Reading from the N-terminus, the 480-residue chain is Uridine/deoxyuridine transporter (480 aa).

The next 14 helical transmembrane spans lie at 14-34 (VGSIVALMVALLVAIFAFQLN), 55-75 (SIALTQTIFFTAAALFALFLP), 93-113 (LTMIGCLISGFATNVGILMIG), 115-135 (ILQGAAGPVVPLCLIILHVKV), 147-167 (ILTSINGGIAGVDALAGGWLV), 174-194 (SVFFVMGITAALAILLVSFGT), 207-227 (WTGVILLVVAMGALLSAVNAL), 239-259 (WLLASILALLGLICFVGFWQV), 280-300 (GLLITTLLTMTGVFAIMNGII), 320-340 (LVTLTPYALAGLFFGPVSGFL), 358-378 (IIGIVLAVAGVLQPSIWLLLL), 382-402 (FIGITYAGITNIMLNGLGIVL), 417-437 (GMFNLGAGLSFIILYAVPTVL), and 449-469 (ISGIVTGLILVIIAFFTSFLI).

Belongs to the major facilitator superfamily. EmrB family.

The protein resides in the cell membrane. Responsible for the uptake of uridine and deoxyuridine. Not involved in purine nucleoside uptake. The chain is Uridine/deoxyuridine transporter from Lactococcus lactis subsp. cremoris (strain MG1363).